The sequence spans 179 residues: MATLYDYYKSKVITQLMHELNYSSVMQVPKIDKITLNMGVGGAASDKKILDNAILDLTAISGQKPLITKARKSVAGFKIRQGYPIGCKVTLRGQKKWHFFERLIIIAVPRIRDFRGLSSHSFDGQGNYSLGIREQIIFPEIDYDKIDRVRGLDITITTTAKSNHEARLLLSAFNFPFRK.

Belongs to the universal ribosomal protein uL5 family. Part of the 50S ribosomal subunit; part of the 5S rRNA/L5/L18/L25 subcomplex. Contacts the 5S rRNA and the P site tRNA. Forms a bridge to the 30S subunit in the 70S ribosome.

This is one of the proteins that bind and probably mediate the attachment of the 5S RNA into the large ribosomal subunit, where it forms part of the central protuberance. In the 70S ribosome it contacts protein S13 of the 30S subunit (bridge B1b), connecting the 2 subunits; this bridge is implicated in subunit movement. Contacts the P site tRNA; the 5S rRNA and some of its associated proteins might help stabilize positioning of ribosome-bound tRNAs. The polypeptide is Large ribosomal subunit protein uL5 (Buchnera aphidicola subsp. Acyrthosiphon pisum (strain APS) (Acyrthosiphon pisum symbiotic bacterium)).